The sequence spans 72 residues: NAD(P)H-quinone oxidoreductase subunit O (72 aa).

It belongs to the complex I NdhO subunit family. As to quaternary structure, NDH-1 can be composed of about 15 different subunits; different subcomplexes with different compositions have been identified which probably have different functions.

The protein resides in the cellular thylakoid membrane. It catalyses the reaction a plastoquinone + NADH + (n+1) H(+)(in) = a plastoquinol + NAD(+) + n H(+)(out). It carries out the reaction a plastoquinone + NADPH + (n+1) H(+)(in) = a plastoquinol + NADP(+) + n H(+)(out). In terms of biological role, NDH-1 shuttles electrons from an unknown electron donor, via FMN and iron-sulfur (Fe-S) centers, to quinones in the respiratory and/or the photosynthetic chain. The immediate electron acceptor for the enzyme in this species is believed to be plastoquinone. Couples the redox reaction to proton translocation, and thus conserves the redox energy in a proton gradient. Cyanobacterial NDH-1 also plays a role in inorganic carbon-concentration. This Synechococcus sp. (strain JA-3-3Ab) (Cyanobacteria bacterium Yellowstone A-Prime) protein is NAD(P)H-quinone oxidoreductase subunit O.